The chain runs to 129 residues: MAKEAARVKRRERKNIASGVAHVNASFNNTMITITDAQGNTISWSSAGAMGFKGSRKSTPYAAQLAAEDAARKAAEHGMRTLEVEVSGPGSGRESALRALQAAGFLVTSIRDVTPIPHNGCRPRKRRRV.

The protein belongs to the universal ribosomal protein uS11 family. Part of the 30S ribosomal subunit. Interacts with proteins S7 and S18. Binds to IF-3.

In terms of biological role, located on the platform of the 30S subunit, it bridges several disparate RNA helices of the 16S rRNA. Forms part of the Shine-Dalgarno cleft in the 70S ribosome. The sequence is that of Small ribosomal subunit protein uS11 from Azorhizobium caulinodans (strain ATCC 43989 / DSM 5975 / JCM 20966 / LMG 6465 / NBRC 14845 / NCIMB 13405 / ORS 571).